The sequence spans 733 residues: DNA repair and recombination protein RAD54-like (733 aa).

A disordered region spans residues Leu-1–Cys-35. The Helicase ATP-binding domain maps to Ser-159–Gly-334. Asp-172–Thr-179 serves as a coordination point for ATP. Residues Asp-285–His-288 carry the DEGH box motif. The Helicase C-terminal domain maps to Leu-488–Glu-642. N6-acetyllysine is present on Lys-504. Ser-561 carries the post-translational modification Phosphoserine; by NEK1.

Belongs to the SNF2/RAD54 helicase family. In terms of assembly, homohexamer. Interacts (via N-terminus) with RAD51. Interacts with NAP1L1. Interacts with BRD9; this interaction orchestrates RAD51-RAD54 complex formation. In terms of processing, acetylated. Acetylation promotes interaction with BRD9, and subsequently with RAD54, which is essential for homologous recombination (HR). Post-translationally, phosphorylated. Phosphorylation at Ser-561 by NEK1 specifically in G2 phase allows efficient removal of RAD51 filaments from DNA. Highly expressed in bursa, thymus, testis, and ovary. Low level of expression seen in all other organs tested.

It localises to the nucleus. Functionally, plays an essential role in homologous recombination (HR) which is a major pathway for repairing DNA double-strand breaks (DSBs), single-stranded DNA (ssDNA) gaps, and stalled or collapsed replication forks. Acts as a molecular motor during the homology search and guides RAD51 ssDNA along a donor dsDNA thereby changing the homology search from the diffusion-based mechanism to a motor-guided mechanism. Plays also an essential role in RAD51-mediated synaptic complex formation which consists of three strands encased in a protein filament formed once homology is recognized. Once DNA strand exchange occured, dissociates RAD51 from nucleoprotein filaments formed on dsDNA. This Gallus gallus (Chicken) protein is DNA repair and recombination protein RAD54-like (RAD54L).